A 293-amino-acid polypeptide reads, in one-letter code: Aromatic amino acid exporter YddG (293 aa).

At 1 to 6 (MTRQKA) the chain is on the cytoplasmic side. In terms of domain architecture, EamA 1 spans 6–137 (ATLIGLIAIV…LALVGVCWVL (132 aa)). Residues 7–27 (TLIGLIAIVLWSTMVGLIRGV) form a helical membrane-spanning segment. Topologically, residues 28-33 (SEGLGP) are periplasmic. A helical transmembrane segment spans residues 34–54 (VGGAAAIYSLSGLLLIFTVGF). Topologically, residues 55–62 (PRIRQIPK) are cytoplasmic. The chain crosses the membrane as a helical span at residues 63–83 (GYLLAGSLLFVSYEICLALSL). The Periplasmic segment spans residues 84 to 92 (GYAATHHQA). A helical transmembrane segment spans residues 93–113 (IEVGMVNYLWPSLTILFAILF). Residues 114–118 (NGQKT) are Cytoplasmic-facing. The helical transmembrane segment at 119–139 (NWLIVPGLLLALVGVCWVLGG) threads the bilayer. Residues 140–155 (DNGLHYDEIINNITTS) lie on the Periplasmic side of the membrane. A helical membrane pass occupies residues 156–176 (PLSYFLAFIGAFIWAAYCTVT). The EamA 2 domain maps to 158–285 (SYFLAFIGAF…ALMVCGGSLL (128 aa)). Residues 177–182 (NKYARG) lie on the Cytoplasmic side of the membrane. A helical transmembrane segment spans residues 183–203 (FNGITVFVLLTGASLWVYYFL). Residues 204-218 (TPQPEMIFSTPVMIK) are Periplasmic-facing. The chain crosses the membrane as a helical span at residues 219–239 (LISAAFTLGFAYAAWNVGILH). Residues 240-243 (GNVT) lie on the Cytoplasmic side of the membrane. The helical transmembrane segment at 244–264 (IMAVGSYFTPVLSSALAAVLL) threads the bilayer. Topologically, residues 265–267 (SAP) are periplasmic. The helical transmembrane segment at 268 to 288 (LSFSFWQGALMVCGGSLLCWL) threads the bilayer. Residues 289–293 (ATRRG) are Cytoplasmic-facing.

This sequence belongs to the drug/metabolite transporter (DMT) superfamily. Aromatic amino acid/paraquat exporter (ArAA/P-E) (TC 2.A.7.17) family.

The protein localises to the cell inner membrane. The enzyme catalyses L-phenylalanine(in) = L-phenylalanine(out). It carries out the reaction L-tyrosine(in) = L-tyrosine(out). It catalyses the reaction L-tryptophan(in) = L-tryptophan(out). The catalysed reaction is L-threonine(in) = L-threonine(out). The enzyme catalyses L-methionine(in) = L-methionine(out). It carries out the reaction L-lysine(in) = L-lysine(out). It catalyses the reaction L-glutamate(out) = L-glutamate(in). The catalysed reaction is L-valine(in) = L-valine(out). The enzyme catalyses L-isoleucine(in) = L-isoleucine(out). Functionally, amino acid transporter with broad substrate specificity. Can transport various amino acids, including phenylalanine, tyrosine, tryptophan, L-threonine, L-methionine, L-lysine, L-glutamate, L-valine and L-isoleucine. Overexpression confers resistance to phenylalanine and increases export of phenylalanine, tyrosine and tryptophan. This Escherichia coli (strain K12) protein is Aromatic amino acid exporter YddG (yddG).